The following is a 501-amino-acid chain: Ribose import ATP-binding protein RbsA (501 aa).

ABC transporter domains lie at Leu8–Thr245 and Val255–Asn500. Gly40–Ser47 provides a ligand contact to ATP.

Belongs to the ABC transporter superfamily. Ribose importer (TC 3.A.1.2.1) family. The complex is composed of an ATP-binding protein (RbsA), two transmembrane proteins (RbsC) and a solute-binding protein (RbsB).

Its subcellular location is the cell membrane. The enzyme catalyses D-ribose(out) + ATP + H2O = D-ribose(in) + ADP + phosphate + H(+). In terms of biological role, part of the ABC transporter complex RbsABC involved in ribose import. Responsible for energy coupling to the transport system. The polypeptide is Ribose import ATP-binding protein RbsA (Clostridium perfringens (strain 13 / Type A)).